The following is a 397-amino-acid chain: Lysophospholipid transporter LplT (397 aa).

The Periplasmic portion of the chain corresponds to 1–17; it reads MSESVHTNTSLWSKGMK. Residues 18–38 traverse the membrane as a helical segment; that stretch reads AVIVAQFLSAFGDNALLFATL. The Cytoplasmic segment spans residues 39 to 52; it reads ALLKAQFYPEWSQP. A helical membrane pass occupies residues 53–73; the sequence is ILQMVFVGAYILFAPFVGQVA. Topologically, residues 74–90 are periplasmic; that stretch reads DSFAKGRVMMFANGLKL. Residues 91–111 traverse the membrane as a helical segment; the sequence is LGAASICFGINPFLGYTLVGV. Residues 112 to 144 lie on the Cytoplasmic side of the membrane; it reads GAAAYSPAKYGILGELTTGSKLVKANGLMEAST. A helical transmembrane segment spans residues 145-165; the sequence is IAAILLGSVAGGVLADWHVLV. Residue Ala166 is a topological domain, periplasmic. Residues 167-187 traverse the membrane as a helical segment; sequence LAACALAYGGAVVANIYIPKL. Topologically, residues 188-226 are cytoplasmic; the sequence is AAARPGQSWNLINMTRSFLNACTSLWRNGETRFSLVGTS. The helical transmembrane segment at 227–247 threads the bilayer; it reads LFWGAGVTLRFLLVLWVPVAL. The Periplasmic segment spans residues 248–256; it reads GITDNATPT. A helical membrane pass occupies residues 257 to 277; sequence YLNAMVAIGIVVGAGAAAKLV. Over 278–280 the chain is Cytoplasmic; it reads TLE. The chain crosses the membrane as a helical span at residues 281–301; sequence TVSRCMPAGILIGVVVLIFSL. Topologically, residues 302–304 are periplasmic; sequence QHE. A helical transmembrane segment spans residues 305-325; the sequence is LLPAYALLMLIGVLGGFFVVP. The Cytoplasmic segment spans residues 326 to 343; that stretch reads LNALLQERGKKSVGAGNA. A helical membrane pass occupies residues 344–364; that stretch reads IAVQNLGENSAMLLMLGIYSL. Residues 365–366 are Periplasmic-facing; sequence AV. The helical transmembrane segment at 367–387 threads the bilayer; that stretch reads MVGIPVVPIGIGFGTLFALAI. At 388-397 the chain is on the cytoplasmic side; sequence TALWIWQRRH.

Belongs to the major facilitator superfamily. LplT (TC 2.A.1.42) family.

It is found in the cell inner membrane. Its function is as follows. Catalyzes the facilitated diffusion of 2-acyl-glycero-3-phosphoethanolamine (2-acyl-GPE) into the cell. In Escherichia coli O9:H4 (strain HS), this protein is Lysophospholipid transporter LplT.